Here is a 375-residue protein sequence, read N- to C-terminus: Tyrosine--tRNA ligase (375 aa).

Residues tyrosine 37, tyrosine 168, glutamine 172, aspartate 175, and glutamine 190 each coordinate L-tyrosine. Residues 251-255 (KMSKS) carry the 'KMSKS' region motif. Lysine 254 lines the ATP pocket.

Belongs to the class-I aminoacyl-tRNA synthetase family. TyrS type 4 subfamily. Homodimer.

The protein localises to the cytoplasm. The catalysed reaction is tRNA(Tyr) + L-tyrosine + ATP = L-tyrosyl-tRNA(Tyr) + AMP + diphosphate + H(+). Catalyzes the attachment of tyrosine to tRNA(Tyr) in a two-step reaction: tyrosine is first activated by ATP to form Tyr-AMP and then transferred to the acceptor end of tRNA(Tyr). This is Tyrosine--tRNA ligase from Thermococcus gammatolerans (strain DSM 15229 / JCM 11827 / EJ3).